Reading from the N-terminus, the 205-residue chain is Holliday junction branch migration complex subunit RuvA (205 aa).

Positions 1–64 are domain I; the sequence is MIGKLRGIVD…DEAIRLIGFT (64 aa). Positions 65–143 are domain II; sequence TDSEREWFRL…DSMGLSAALE (79 aa). Residues 144–152 are flexible linker; it reads VGVNGEAVS. A domain III region spans residues 153–205; sequence SVSAPARDAVSALVNLGYPQAQAMGAVAAAAKRLDDAASTEQLIRHGLKELAR.

The protein belongs to the RuvA family. As to quaternary structure, homotetramer. Forms an RuvA(8)-RuvB(12)-Holliday junction (HJ) complex. HJ DNA is sandwiched between 2 RuvA tetramers; dsDNA enters through RuvA and exits via RuvB. An RuvB hexamer assembles on each DNA strand where it exits the tetramer. Each RuvB hexamer is contacted by two RuvA subunits (via domain III) on 2 adjacent RuvB subunits; this complex drives branch migration. In the full resolvosome a probable DNA-RuvA(4)-RuvB(12)-RuvC(2) complex forms which resolves the HJ.

It is found in the cytoplasm. The RuvA-RuvB-RuvC complex processes Holliday junction (HJ) DNA during genetic recombination and DNA repair, while the RuvA-RuvB complex plays an important role in the rescue of blocked DNA replication forks via replication fork reversal (RFR). RuvA specifically binds to HJ cruciform DNA, conferring on it an open structure. The RuvB hexamer acts as an ATP-dependent pump, pulling dsDNA into and through the RuvAB complex. HJ branch migration allows RuvC to scan DNA until it finds its consensus sequence, where it cleaves and resolves the cruciform DNA. The chain is Holliday junction branch migration complex subunit RuvA from Parvibaculum lavamentivorans (strain DS-1 / DSM 13023 / NCIMB 13966).